We begin with the raw amino-acid sequence, 143 residues long: Cofilin/actin-depolymerizing factor homolog 2 (143 aa).

The region spanning Gly-4–Leu-141 is the ADF-H domain.

The protein belongs to the actin-binding proteins ADF family. Interacts with monomeric actin, does not bind to actin polymers.

Its subcellular location is the cytoplasm. The protein localises to the cytoskeleton. Its function is as follows. Not involved in actin polymerisation, instead functions to stimulate nucleotide exchange on monomeric actin and influence turnover of the small amount of cytosolic actin microfilaments. Essential for erythrocytic schizogony. This is Cofilin/actin-depolymerizing factor homolog 2 from Plasmodium falciparum (isolate 3D7).